We begin with the raw amino-acid sequence, 430 residues long: Enolase (430 aa).

Q162 is a binding site for (2R)-2-phosphoglycerate. E204 serves as the catalytic Proton donor. Residues D241, E283, and D310 each coordinate Mg(2+). 4 residues coordinate (2R)-2-phosphoglycerate: K335, R364, S365, and K386. The active-site Proton acceptor is K335.

It belongs to the enolase family. It depends on Mg(2+) as a cofactor.

The protein localises to the cytoplasm. The protein resides in the secreted. It is found in the cell surface. It catalyses the reaction (2R)-2-phosphoglycerate = phosphoenolpyruvate + H2O. The protein operates within carbohydrate degradation; glycolysis; pyruvate from D-glyceraldehyde 3-phosphate: step 4/5. Its function is as follows. Catalyzes the reversible conversion of 2-phosphoglycerate (2-PG) into phosphoenolpyruvate (PEP). It is essential for the degradation of carbohydrates via glycolysis. This chain is Enolase, found in Mycobacteroides abscessus (strain ATCC 19977 / DSM 44196 / CCUG 20993 / CIP 104536 / JCM 13569 / NCTC 13031 / TMC 1543 / L948) (Mycobacterium abscessus).